Here is a 188-residue protein sequence, read N- to C-terminus: NADH-quinone oxidoreductase subunit B (188 aa).

Positions 67, 68, 132, and 162 each coordinate [4Fe-4S] cluster.

This sequence belongs to the complex I 20 kDa subunit family. NDH-1 is composed of 14 different subunits. Subunits NuoB, C, D, E, F, and G constitute the peripheral sector of the complex. [4Fe-4S] cluster is required as a cofactor.

It is found in the cell inner membrane. The enzyme catalyses a quinone + NADH + 5 H(+)(in) = a quinol + NAD(+) + 4 H(+)(out). Functionally, NDH-1 shuttles electrons from NADH, via FMN and iron-sulfur (Fe-S) centers, to quinones in the respiratory chain. Couples the redox reaction to proton translocation (for every two electrons transferred, four hydrogen ions are translocated across the cytoplasmic membrane), and thus conserves the redox energy in a proton gradient. This is NADH-quinone oxidoreductase subunit B from Maricaulis maris (strain MCS10) (Caulobacter maris).